We begin with the raw amino-acid sequence, 228 residues long: Geranylgeranylglyceryl phosphate synthase (228 aa).

K14 is a binding site for sn-glycerol 1-phosphate. D16 and T42 together coordinate Mg(2+). Sn-glycerol 1-phosphate is bound by residues Y160–G165, G190, and G210–N211.

It belongs to the GGGP/HepGP synthase family. Group I subfamily. Requires Mg(2+) as cofactor.

It is found in the cytoplasm. The enzyme catalyses sn-glycerol 1-phosphate + (2E,6E,10E)-geranylgeranyl diphosphate = sn-3-O-(geranylgeranyl)glycerol 1-phosphate + diphosphate. It functions in the pathway membrane lipid metabolism; glycerophospholipid metabolism. Functionally, prenyltransferase that catalyzes the transfer of the geranylgeranyl moiety of geranylgeranyl diphosphate (GGPP) to the C3 hydroxyl of sn-glycerol-1-phosphate (G1P). This reaction is the first ether-bond-formation step in the biosynthesis of archaeal membrane lipids. The sequence is that of Geranylgeranylglyceryl phosphate synthase from Methanocella arvoryzae (strain DSM 22066 / NBRC 105507 / MRE50).